We begin with the raw amino-acid sequence, 157 residues long: S-ribosylhomocysteine lyase (157 aa).

Fe cation contacts are provided by His-54, His-58, and Cys-126.

It belongs to the LuxS family. As to quaternary structure, homodimer. Requires Fe cation as cofactor.

The enzyme catalyses S-(5-deoxy-D-ribos-5-yl)-L-homocysteine = (S)-4,5-dihydroxypentane-2,3-dione + L-homocysteine. Its function is as follows. Involved in the synthesis of autoinducer 2 (AI-2) which is secreted by bacteria and is used to communicate both the cell density and the metabolic potential of the environment. The regulation of gene expression in response to changes in cell density is called quorum sensing. Catalyzes the transformation of S-ribosylhomocysteine (RHC) to homocysteine (HC) and 4,5-dihydroxy-2,3-pentadione (DPD). The chain is S-ribosylhomocysteine lyase from Bacillus cytotoxicus (strain DSM 22905 / CIP 110041 / 391-98 / NVH 391-98).